We begin with the raw amino-acid sequence, 108 residues long: uncharacterized protein (108 aa).

This is an uncharacterized protein from Acanthamoeba polyphaga (Amoeba).